Consider the following 209-residue polypeptide: MSERGLLIVFSGPSGVGKGTVRQEIFSKSDHKFEYSVSMTTRAQRPGEVDGKDYFFRSREEFEELIRNGQMLEYAEYVGNYYGTPLAYVNETLDKGIDVFLEIEVQGALQVKKKVPDAVFIFLTPPDLNELEERLVGRGTDSEEVIAQRIERAREEIALMSEYDYTIVNDEVPLAAERVKRVIEAEHFRVERVIGHYRNMISDKRLSDK.

Positions 5–184 (GLLIVFSGPS…AAERVKRVIE (180 aa)) constitute a Guanylate kinase-like domain. 12-19 (GPSGVGKG) provides a ligand contact to ATP.

It belongs to the guanylate kinase family.

The protein localises to the cytoplasm. The enzyme catalyses GMP + ATP = GDP + ADP. In terms of biological role, essential for recycling GMP and indirectly, cGMP. The protein is Guanylate kinase of Streptococcus thermophilus (strain CNRZ 1066).